The primary structure comprises 191 residues: MPLHSLERDNMRRLIAPSILVTVFLVPALALTNTSDSYPLDGSVGTQTIHVDALRGVVSIRDNSVQSEWDGVMDYKNDLLAAKLFSKMACVLAKMDPAAFPSLDDITQALGKQASGHYPPTRGLTYTVLPSRIKNLAQYGVPIKDLCRAVPTYFARQQKEGTALTMDPDSCSELQLLSFMGLSICGEIPGL.

The signal sequence occupies residues 1–30 (MPLHSLERDNMRRLIAPSILVTVFLVPALA). Asn33 carries an N-linked (GlcNAc...) asparagine glycan. Residues 63 to 155 (NSVQSEWDGV…LCRAVPTYFA (93 aa)) enclose the BRICHOS domain. Residues Cys90 and Cys147 are joined by a disulfide bond.

The protein belongs to the gastrokine family. As to expression, expressed in stomach. Present in mucus cells at the base of antral glands, and Brunner glands of the duodenum. Present at lower levels in the mucus neck cell region of the fundus (at protein level).

It is found in the secreted. In terms of biological role, inhibits gastric epithelial cell proliferation. This chain is Gastrokine-3 (Gkn3), found in Mus musculus (Mouse).